The primary structure comprises 243 residues: Mesoderm posterior protein 1 (243 aa).

The segment at 1 to 86 (MAQPLCEPRS…QRQSASEREK (86 aa)) is disordered. Residues 27–36 (DGNSVCSPAW) are compositionally biased toward polar residues. Positions 76 to 130 (GQRQSASEREKLRMRTLARALHELRRFLPPSVAPTGQNLTKIETLRLAIRYIGHL) constitute a bHLH domain. Positions 153–157 (CPLCP) match the CPLCP motif. The interval 204–228 (AETASQERQEMEPSPSSPLFSSDML) is disordered.

No expression was detected in adult tissues except the testis. Expression in the testis was regulated developmentally; expressed 2 weeks after birth, and increases, reaching the full expression level in mature testes.

The protein resides in the nucleus. Transcription factor. Plays a role in the epithelialization of somitic mesoderm and in the development of cardiac mesoderm. Defines the rostrocaudal patterning of the somites by participating in distinct Notch pathways. This chain is Mesoderm posterior protein 1 (Mesp1), found in Mus musculus (Mouse).